The chain runs to 119 residues: MKRIAFVFSTTPHGTAAGREGLDALLATSALTDELAVFFIADGVFQLLPGQKPDTVLARDYIATFKLLGLYDIEQCWVCAASLRERGLDPQTSFVVEATPLEADALRRELANYDVILRF.

This sequence belongs to the DsrF/TusC family. As to quaternary structure, heterohexamer, formed by a dimer of trimers. The hexameric TusBCD complex contains 2 copies each of TusB, TusC and TusD. The TusBCD complex interacts with TusE.

It is found in the cytoplasm. Functionally, part of a sulfur-relay system required for 2-thiolation of 5-methylaminomethyl-2-thiouridine (mnm(5)s(2)U) at tRNA wobble positions. The chain is Protein TusC from Escherichia fergusonii (strain ATCC 35469 / DSM 13698 / CCUG 18766 / IAM 14443 / JCM 21226 / LMG 7866 / NBRC 102419 / NCTC 12128 / CDC 0568-73).